The chain runs to 434 residues: Mitochondrial distribution and morphology protein 12 (434 aa).

Residues 1-434 form the SMP-LTD domain; that stretch reads MSIDIDWERA…VYPSFWTFLV (434 aa). Acidic residues predominate over residues 70–83; the sequence is YEEDDNENFSESSE. Disordered stretches follow at residues 70 to 141 and 181 to 275; these read YEED…LRSP and TPLG…DDLP. Positions 86–97 are enriched in basic and acidic residues; that stretch reads SPTREPVDRYGS. Residues 215 to 237 show a composition bias toward polar residues; sequence SAQSRPSTANTGNTLLSRGSMSS.

It belongs to the MDM12 family. In terms of assembly, component of the ER-mitochondria encounter structure (ERMES) or MDM complex, composed of MMM1, MDM10, MDM12 and MDM34. An MMM1 homodimer associates with one molecule of MDM12 on each side in a pairwise head-to-tail manner, and the SMP-LTD domains of MMM1 and MDM12 generate a continuous hydrophobic tunnel for phospholipid trafficking.

It localises to the mitochondrion outer membrane. It is found in the endoplasmic reticulum membrane. Its function is as follows. Component of the ERMES/MDM complex, which serves as a molecular tether to connect the endoplasmic reticulum (ER) and mitochondria. Components of this complex are involved in the control of mitochondrial shape and protein biogenesis, and function in nonvesicular lipid trafficking between the ER and mitochondria. MDM12 is required for the interaction of the ER-resident membrane protein MMM1 and the outer mitochondrial membrane-resident beta-barrel protein MDM10. The MDM12-MMM1 subcomplex functions in the major beta-barrel assembly pathway that is responsible for biogenesis of all mitochondrial outer membrane beta-barrel proteins, and acts in a late step after the SAM complex. The MDM10-MDM12-MMM1 subcomplex further acts in the TOM40-specific pathway after the action of the MDM12-MMM1 complex. Essential for establishing and maintaining the structure of mitochondria and maintenance of mtDNA nucleoids. This is Mitochondrial distribution and morphology protein 12 from Blastomyces gilchristii (strain SLH14081) (Blastomyces dermatitidis).